The sequence spans 386 residues: O-methyltransferase aunE (386 aa).

S-adenosyl-L-methionine is bound at residue Trp-200. Catalysis depends on His-299, which acts as the Proton acceptor.

This sequence belongs to the class I-like SAM-binding methyltransferase superfamily. Cation-independent O-methyltransferase family.

Its pathway is secondary metabolite biosynthesis. O-methyltransferase; part of the gene cluster that mediates the biosynthesis of aurasperone B, a dimeric gamma-naphthopyrone. The first step in the biosynthesis of aurasperone B is the production of gamma-naphthopyrone precursor YWA1 by the non-reducing polyketide synthase albA, via condensation of one acetyl-CoA starter unit with 6 malonyl-CoA units. YWA1 is then methylated by aunE at position C-6 to yield foncesin which is further methylated at position C-8 by aunD to produce fonsecin B. A key enzyme in the biosynthetic pathway is the cytochrome P450 monooxygenase aunB which catalyzes the oxidative dimerization of fonsecin B to aurasperone B. AunB also catalyzes the oxidative dimerization of rubrofusarin B into aurasperone A. This is O-methyltransferase aunE from Aspergillus niger (strain ATCC MYA-4892 / CBS 513.88 / FGSC A1513).